Reading from the N-terminus, the 193-residue chain is Peptidyl-tRNA hydrolase (193 aa).

Y14 serves as a coordination point for tRNA. The active-site Proton acceptor is H19. TRNA is bound by residues F64, N66, and N112.

This sequence belongs to the PTH family. Monomer.

It is found in the cytoplasm. It carries out the reaction an N-acyl-L-alpha-aminoacyl-tRNA + H2O = an N-acyl-L-amino acid + a tRNA + H(+). Its function is as follows. Hydrolyzes ribosome-free peptidyl-tRNAs (with 1 or more amino acids incorporated), which drop off the ribosome during protein synthesis, or as a result of ribosome stalling. Functionally, catalyzes the release of premature peptidyl moieties from peptidyl-tRNA molecules trapped in stalled 50S ribosomal subunits, and thus maintains levels of free tRNAs and 50S ribosomes. The polypeptide is Peptidyl-tRNA hydrolase (Bartonella bacilliformis (strain ATCC 35685 / KC583 / Herrer 020/F12,63)).